Here is a 315-residue protein sequence, read N- to C-terminus: tRNA-cytidine(32) 2-sulfurtransferase (315 aa).

A PP-loop motif motif is present at residues 39–44 (SGGKDS). [4Fe-4S] cluster contacts are provided by Cys114, Cys117, and Cys205.

It belongs to the TtcA family. Homodimer. The cofactor is Mg(2+). It depends on [4Fe-4S] cluster as a cofactor.

Its subcellular location is the cytoplasm. It catalyses the reaction cytidine(32) in tRNA + S-sulfanyl-L-cysteinyl-[cysteine desulfurase] + AH2 + ATP = 2-thiocytidine(32) in tRNA + L-cysteinyl-[cysteine desulfurase] + A + AMP + diphosphate + H(+). Its pathway is tRNA modification. Its function is as follows. Catalyzes the ATP-dependent 2-thiolation of cytidine in position 32 of tRNA, to form 2-thiocytidine (s(2)C32). The sulfur atoms are provided by the cysteine/cysteine desulfurase (IscS) system. This is tRNA-cytidine(32) 2-sulfurtransferase from Ralstonia pickettii (strain 12J).